Reading from the N-terminus, the 146-residue chain is Probable gamma-secretase subunit PEN-2 (146 aa).

A disordered region spans residues 1–26 (MEATRSDDPSLNPIRNRNPNPNPNPN). Topologically, residues 1–61 (MEATRSDDPS…SVDYARRFYK (61 aa)) are lumenal. Low complexity predominate over residues 9 to 19 (PSLNPIRNRNP). A helical membrane pass occupies residues 62–82 (FGFALLPWLWFVNCFYFWPVL). Residues 83-98 (RHSRAFPQIRNYVVRS) lie on the Cytoplasmic side of the membrane. A helical membrane pass occupies residues 99 to 119 (AIGFSVFTALLSAWALTFSIG). Over 120–146 (GEQLFGPLYDKLVMYNVADRLGLSGLA) the chain is Lumenal.

It belongs to the PEN-2 family. Probable component of the gamma-secretase complex, a complex composed of a presenilin homodimer, nicastrin, APH1 and PEN2.

Its subcellular location is the membrane. Its function is as follows. Probable subunit of the gamma-secretase complex, an endoprotease complex that catalyzes the intramembrane cleavage of integral membrane proteins such as Notch receptors. The chain is Probable gamma-secretase subunit PEN-2 from Arabidopsis thaliana (Mouse-ear cress).